The following is a 514-amino-acid chain: ATP synthase subunit alpha (514 aa).

ATP is bound at residue 170-177 (GDRQTGKT).

The protein belongs to the ATPase alpha/beta chains family. F-type ATPases have 2 components, CF(1) - the catalytic core - and CF(0) - the membrane proton channel. CF(1) has five subunits: alpha(3), beta(3), gamma(1), delta(1), epsilon(1). CF(0) has three main subunits: a(1), b(2) and c(9-12). The alpha and beta chains form an alternating ring which encloses part of the gamma chain. CF(1) is attached to CF(0) by a central stalk formed by the gamma and epsilon chains, while a peripheral stalk is formed by the delta and b chains.

The protein resides in the cell inner membrane. It catalyses the reaction ATP + H2O + 4 H(+)(in) = ADP + phosphate + 5 H(+)(out). Its function is as follows. Produces ATP from ADP in the presence of a proton gradient across the membrane. The alpha chain is a regulatory subunit. In Psychrobacter sp. (strain PRwf-1), this protein is ATP synthase subunit alpha.